The following is a 351-amino-acid chain: MKKTAIAIAVALAGFATVAQAAPKDNTWYTGAKLGWSQYHDTGFIDNNGPTHENQLGAGAFGGYQVNPYVGFEMGYDWLGRMPYKGSVENGAYKAQGVQLTAKLGYPITDDLDIYTRLGGMVWRADTKAHNNVTGESEKNHDTGVSPVFAGGVEWAITPEIATRLEYQWTNNIGDANTIGTRPDNGLLSLGVSYRFGQGEAAPVVAPAPAPAPEVQTKHFTLKSDVLFNFNKATLKPEGQAALDQLYSQLSNLDPKDGSVVVLGYTDRIGSDAYNQGLSERRAQSVVDYLISKGIPADKISARGMGESNPVTGNTCDNVKQRAALIDCLAPDRRVEIEVKGIKDVVTQPQA.

Residues 1–21 (MKKTAIAIAVALAGFATVAQA) form the signal peptide. A run of 8 beta stranded transmembrane segments spans residues 27 to 37 (TWYTGAKLGWS), 55 to 66 (QLGAGAFGGYQV), 70 to 78 (VGFEMGYDW), 96 to 107 (QGVQLTAKLGYP), 112 to 120 (LDIYTRLGG), 147 to 156 (PVFAGGVEWA), 161 to 168 (IATRLEYQ), and 187 to 195 (LLSLGVSYR). 4 consecutive repeat copies span residues 206–207 (AP), 208–209 (AP), 210–211 (AP), and 212–213 (AP). Positions 206 to 213 (APAPAPAP) are 4 X 2 AA tandem repeats of A-P. An OmpA-like domain is found at 215–343 (VQTKHFTLKS…RVEIEVKGIK (129 aa)). Cys-316 and Cys-328 form a disulfide bridge.

The protein belongs to the outer membrane OOP (TC 1.B.6) superfamily. OmpA family. Monomer and homodimer.

It is found in the cell outer membrane. Functionally, with TolR probably plays a role in maintaining the position of the peptidoglycan cell wall in the periplasm. Acts as a porin with low permeability that allows slow penetration of small solutes; an internal gate slows down solute passage. In terms of biological role, required for conjugation with F-type plasmids; probably serves as the mating receptor on recipient cells. The protein is Outer membrane protein A of Escherichia fergusonii (strain ATCC 35469 / DSM 13698 / CCUG 18766 / IAM 14443 / JCM 21226 / LMG 7866 / NBRC 102419 / NCTC 12128 / CDC 0568-73).